Here is a 626-residue protein sequence, read N- to C-terminus: Janus kinase and microtubule-interacting protein 1 (626 aa).

The segment at 1-25 (MSKKGRSKGEKPETETDSVQMANEE) is disordered. The interval 1 to 365 (MSKKGRSKGE…KLKSLTRENV (365 aa)) is mediates association with microtubules. 2 coiled-coil regions span residues 13–255 (ETET…EAER) and 284–413 (ERDV…DDLS). The tract at residues 365-626 (VEMKEKLSAQ…ILFEPKLKFV (262 aa)) is mediates interaction with TYK2 and GABBR1. Ser-382 is modified (phosphoserine). A compositionally biased stretch (polar residues) spans 452-461 (ETLSETSYNT). The interval 452-481 (ETLSETSYNTDRTDRTPATPEEDLDETTTR) is disordered. Thr-470 carries the phosphothreonine modification. Positions 490–604 (QLTREYQALQ…EFRVLELEVR (115 aa)) form a coiled coil.

It belongs to the JAKMIP family. As to quaternary structure, homodimer. Interacts with JAK1 and TYK2. Forms a complex with GABBR1 and KIF5B/kinesin-1. Phosphorylated. Specifically expressed in brain and testis by spermatogonia, spermatocytes, spermatozoa and Sertoli cells (at protein level).

It is found in the cytoplasm. The protein localises to the cytoskeleton. It localises to the membrane. Associates with microtubules and may play a role in the microtubule-dependent transport of the GABA-B receptor. May play a role in JAK1 signaling and regulate microtubule cytoskeleton rearrangements. The polypeptide is Janus kinase and microtubule-interacting protein 1 (Jakmip1) (Rattus norvegicus (Rat)).